Consider the following 840-residue polypeptide: N-acetyltransferase ESCO1 (840 aa).

A compositionally biased stretch (basic and acidic residues) spans 1–25; it reads MMSIQEKSKENSSKVTKKSDDKNSE. The interval 1-188 is disordered; sequence MMSIQEKSKE…VLEVKSDSKE (188 aa). Polar residues-rich tracts occupy residues 46–58, 65–74, and 81–96; these read KSQA…SKIN, RMSTRSSKAA, and KSIN…YSQE. Residues 131 to 140 are compositionally biased toward basic and acidic residues; the sequence is VSRRSLRSRE. The segment covering 141–153 has biased composition (polar residues); sequence IQGQVQAVKQSLP. A compositionally biased stretch (low complexity) spans 161 to 170; that stretch reads SSTQSKSNKT. A compositionally biased stretch (basic and acidic residues) spans 178–188; the sequence is KVLEVKSDSKE. Serine 200 is subject to Phosphoserine. Disordered stretches follow at residues 221–300 and 318–338; these read TQGS…KSKR and NVEV…KPTE. Polar residues predominate over residues 267-278; it reads HTQVNTNTTLPK. Positions 319–338 are enriched in basic and acidic residues; sequence VEVKKESSQMESVKEEKPTE. Lysine 332 is covalently cross-linked (Glycyl lysine isopeptide (Lys-Gly) (interchain with G-Cter in SUMO2)). Position 412 is a phosphoserine (serine 412). Disordered stretches follow at residues 486-505 and 542-582; these read ANEI…HSFD and TGEN…KCNS. Polar residues predominate over residues 551–565; the sequence is APQQHSILSNQTSKS. A CCHH-type zinc finger spans residues 617–641; it reads VSCNVCGMLYTASNPEDETQHLLFH. Acetyl-CoA contacts are provided by residues 772-774, 780-785, and 812-814; these read IWV, RKKIAS, and TPD.

Belongs to the acetyltransferase family. ECO subfamily. The subunit structure is controversial. Monomer. Homodimer. Post-translationally, phosphorylated during mitosis, when associated with chromosomes. In terms of tissue distribution, widely expressed. Expressed in heart, brain, liver, placenta, lung, kidney and pancreas. Highly expressed in muscle.

It localises to the nucleus. Its subcellular location is the chromosome. The enzyme catalyses L-lysyl-[protein] + acetyl-CoA = N(6)-acetyl-L-lysyl-[protein] + CoA + H(+). Its function is as follows. Acetyltransferase required for the establishment of sister chromatid cohesion. Couples the processes of cohesion and DNA replication to ensure that only sister chromatids become paired together. In contrast to the structural cohesins, the deposition and establishment factors are required only during S phase. Acts by mediating the acetylation of cohesin component SMC3. This Homo sapiens (Human) protein is N-acetyltransferase ESCO1 (ESCO1).